The following is a 385-amino-acid chain: Glycine/sarcosine/betaine reductase complex component C subunit alpha (385 aa).

Residue Cys-359 is part of the active site.

As to quaternary structure, heterooctamer of four alpha and four beta subunits. Component of the glycine, sarcosine and betaine reductase complexes, together with proteins A and B.

The catalysed reaction is acetyl phosphate + [thioredoxin]-disulfide + NH4(+) + H2O = [thioredoxin]-dithiol + glycine + phosphate + H(+). The enzyme catalyses acetyl phosphate + methylamine + [thioredoxin]-disulfide + H2O = sarcosine + [thioredoxin]-dithiol + phosphate + H(+). It carries out the reaction acetyl phosphate + trimethylamine + [thioredoxin]-disulfide + H2O = glycine betaine + [thioredoxin]-dithiol + phosphate + H(+). In the first step of glycine, betaine and sarcosine reductases, the substrate is bound to component PB via a Schiff base intermediate. Then the PB-activated substrate is nucleophilically attacked by the selenol anion of component PA to transform it to a carboxymethylated selenoether and the respective amine. By action of component PC, acetyl phosphate is formed, leaving component PA in its oxidized state. Finally component PA becomes reduced by the thioredoxin system to start a new catalytic cycle of reductive deamination. The polypeptide is Glycine/sarcosine/betaine reductase complex component C subunit alpha (grdD) (Peptoclostridium acidaminophilum (Eubacterium acidaminophilum)).